Reading from the N-terminus, the 113-residue chain is MKITLSKRIGLLAFLLPCALALSTTVHAETNKLVIESGDSAQSRQRAAMEKEQWNDTRNLRQKVNKRTEKEWDKADAAFDNRDKCEQSANINAYWEPNTLRCLDRRTGRVIIP.

The first 28 residues, 1–28 (MKITLSKRIGLLAFLLPCALALSTTVHA), serve as a signal peptide directing secretion.

Belongs to the UPF0482 family.

This is UPF0482 protein YnfB from Escherichia coli O127:H6 (strain E2348/69 / EPEC).